Here is a 194-residue protein sequence, read N- to C-terminus: MAAQPVIKVAGLCGSLRKGSYNRGLLNAAMEICKDSITGMEIEYVDISPLPFLNTDLEVNGTYPPVVEAFRKKIEEADCFLFASPEYNYSITGPLKNAIDWASRPPNVWADKAAAMVSAGGGFGGGRSQYHLRQIGVFLDLHFINKPEFFLNAFQQPPKFDSDGVLTDEETKQRLRAVLLALQALALKLKGKCE.

This sequence belongs to the SsuE family. In terms of assembly, homotetramer. The cofactor is FMN.

The enzyme catalyses a quinone + NADH + H(+) = a quinol + NAD(+). The catalysed reaction is a quinone + NADPH + H(+) = a quinol + NADP(+). In terms of biological role, the enzyme apparently serves as a quinone reductase in connection with conjugation reactions of hydroquinones involved in detoxification pathways. This chain is NAD(P)H:quinone oxidoreductase, found in Solanum tuberosum (Potato).